Reading from the N-terminus, the 207-residue chain is Ribosomal RNA large subunit methyltransferase E (207 aa).

Positions 1 to 20 (MKRDPTKGRKTPDHYARKAK) are disordered. The S-adenosyl-L-methionine site is built by glycine 56, tryptophan 58, aspartate 76, aspartate 94, and aspartate 116. The active-site Proton acceptor is lysine 156.

Belongs to the class I-like SAM-binding methyltransferase superfamily. RNA methyltransferase RlmE family.

It localises to the cytoplasm. It catalyses the reaction uridine(2552) in 23S rRNA + S-adenosyl-L-methionine = 2'-O-methyluridine(2552) in 23S rRNA + S-adenosyl-L-homocysteine + H(+). Specifically methylates the uridine in position 2552 of 23S rRNA at the 2'-O position of the ribose in the fully assembled 50S ribosomal subunit. The polypeptide is Ribosomal RNA large subunit methyltransferase E (Desulfosudis oleivorans (strain DSM 6200 / JCM 39069 / Hxd3) (Desulfococcus oleovorans)).